We begin with the raw amino-acid sequence, 138 residues long: Thyrotropin subunit beta (138 aa).

Positions 1–20 (MTAIYLMSMLFGLACGQAMS) are cleaved as a signal peptide. 6 disulfide bridges follow: Cys22-Cys72, Cys36-Cys87, Cys39-Cys125, Cys47-Cys103, Cys51-Cys105, and Cys108-Cys115. Asn43 is a glycosylation site (N-linked (GlcNAc...) asparagine). The propeptide occupies 133–138 (VVGFSI).

Belongs to the glycoprotein hormones subunit beta family. In terms of assembly, heterodimer of a common alpha chain and a unique beta chain which confers biological specificity to thyrotropin, lutropin, follitropin and gonadotropin.

It is found in the secreted. Indispensable for the control of thyroid structure and metabolism. In Canis lupus familiaris (Dog), this protein is Thyrotropin subunit beta (TSHB).